Reading from the N-terminus, the 480-residue chain is Glycogen synthase (480 aa).

Lys15 serves as a coordination point for ADP-alpha-D-glucose.

This sequence belongs to the glycosyltransferase 1 family. Bacterial/plant glycogen synthase subfamily.

The catalysed reaction is [(1-&gt;4)-alpha-D-glucosyl](n) + ADP-alpha-D-glucose = [(1-&gt;4)-alpha-D-glucosyl](n+1) + ADP + H(+). Its pathway is glycan biosynthesis; glycogen biosynthesis. Synthesizes alpha-1,4-glucan chains using ADP-glucose. The sequence is that of Glycogen synthase from Desulforamulus reducens (strain ATCC BAA-1160 / DSM 100696 / MI-1) (Desulfotomaculum reducens).